Consider the following 244-residue polypeptide: Phosphoadenosine 5'-phosphosulfate reductase (244 aa).

Cys-239 acts as the Nucleophile; cysteine thiosulfonate intermediate in catalysis.

This sequence belongs to the PAPS reductase family. CysH subfamily.

The protein localises to the cytoplasm. The enzyme catalyses [thioredoxin]-disulfide + sulfite + adenosine 3',5'-bisphosphate + 2 H(+) = [thioredoxin]-dithiol + 3'-phosphoadenylyl sulfate. It functions in the pathway sulfur metabolism; hydrogen sulfide biosynthesis; sulfite from sulfate: step 3/3. Catalyzes the formation of sulfite from phosphoadenosine 5'-phosphosulfate (PAPS) using thioredoxin as an electron donor. This chain is Phosphoadenosine 5'-phosphosulfate reductase, found in Salmonella dublin (strain CT_02021853).